Consider the following 314-residue polypeptide: Fibrinogen-like protein 1 (314 aa).

Positions 1–22 (MGKIYSFVLVAIALMMGREGWA) are cleaved as a signal peptide. The stretch at 28–62 (CLREQVRLRAQVHQLETRVKQQQTMIAQLLHEKEV) forms a coiled coil. Residues 76-308 (LGGKRQYADC…SVVMKIRPSD (233 aa)) enclose the Fibrinogen C-terminal domain. 2 disulfides stabilise this stretch: C85-C114 and C250-C263.

As to quaternary structure, homodimer. Interacts (via the Fibrinogen C-terminal domain) with LAG3 (via Ig-like domains 1 and 2). Mainly expressed in liver. Also expressed in brown adipose tissue.

The protein localises to the secreted. Immune suppressive molecule that inhibits antigen-specific T-cell activation by acting as a major ligand of LAG3. Responsible for LAG3 T-cell inhibitory function. Binds LAG3 independently from MHC class II (MHC-II). Secreted by, and promotes growth of, hepatocytes. This chain is Fibrinogen-like protein 1 (Fgl1), found in Mus musculus (Mouse).